The following is a 101-amino-acid chain: MAKKSKIAKNEQRRAIVERYAERRAELKEIIRSPASSPEQRVAAQSELNRQPRDASAVRLRNRDAVDGRPRGYLRKFGLSRVRVRELVHDGSLPGVRKASW.

Positions 31 to 59 (IRSPASSPEQRVAAQSELNRQPRDASAVR) are disordered.

It belongs to the universal ribosomal protein uS14 family. In terms of assembly, part of the 30S ribosomal subunit. Contacts proteins S3 and S10.

Functionally, binds 16S rRNA, required for the assembly of 30S particles and may also be responsible for determining the conformation of the 16S rRNA at the A site. The sequence is that of Small ribosomal subunit protein uS14A from Mycobacteroides abscessus (strain ATCC 19977 / DSM 44196 / CCUG 20993 / CIP 104536 / JCM 13569 / NCTC 13031 / TMC 1543 / L948) (Mycobacterium abscessus).